A 498-amino-acid chain; its full sequence is Lysine--tRNA ligase (498 aa).

Residues Glu-407 and Glu-414 each contribute to the Mg(2+) site.

Belongs to the class-II aminoacyl-tRNA synthetase family. As to quaternary structure, homodimer. Requires Mg(2+) as cofactor.

Its subcellular location is the cytoplasm. It catalyses the reaction tRNA(Lys) + L-lysine + ATP = L-lysyl-tRNA(Lys) + AMP + diphosphate. This Rhizobium etli (strain CIAT 652) protein is Lysine--tRNA ligase.